Here is a 107-residue protein sequence, read N- to C-terminus: Pro-corazonin (107 aa).

Positions 1–21 are cleaved as a signal peptide; that stretch reads MVNSQILILFILSLTITIVMC. A Pyrrolidone carboxylic acid modification is found at Gln-22. Position 32 is an asparagine amide (Asn-32). The propeptide occupies 88 to 107; sequence SFSENMINDHRQPAPTNNNY.

It belongs to the corazonin family. As to expression, in the adult brain, expressed in four neurons of the lateral protocerebrum project axons towards the retrocerebral complex.

It localises to the secreted. Its function is as follows. Cardioactive peptide. Corazonin is probably involved in the physiological regulation of the heart beat. This is Pro-corazonin from Apis mellifera (Honeybee).